The primary structure comprises 570 residues: Apyrase (570 aa).

The N-terminal stretch at 1-23 (MALVRFATIITVLCHLAIQDGAA) is a signal peptide. Positions 43, 45, and 94 each coordinate a divalent metal cation. N108 is a glycosylation site (N-linked (GlcNAc...) asparagine). A divalent metal cation is bound by residues N126, H229, and H253. N-linked (GlcNAc...) asparagine glycosylation is found at N287 and N326. R367 contacts AMP. Residue N387 is glycosylated (N-linked (GlcNAc...) asparagine). 2 residues coordinate AMP: R402 and D507. N-linked (GlcNAc...) asparagine glycosylation is found at N552 and N555.

This sequence belongs to the 5'-nucleotidase family. Interacts with human PLAT; the interaction results in PLAT activation probably via an allosteric activation mechanism. Requires a divalent metal cation as cofactor. As to expression, saliva (at protein level). Salivary gland (at protein level). Not detected in midgut.

Its subcellular location is the secreted. The enzyme catalyses a ribonucleoside 5'-triphosphate + 2 H2O = a ribonucleoside 5'-phosphate + 2 phosphate + 2 H(+). Cleaves adenosine triphosphate (ATP) and adenosine diphosphate (ADP) to adenosine monophosphate (AMP) and inorganic phosphate. Enhances fibrin degradation in the midgut blood bolus. Activates human tissue plasminogen activator (PLAT), probably via an allosteric activation mechanism. Inhibits ADP-mediated host platelet aggregation in vitro and in mosquito midgut. Inhibits host neutrophil activation in the mosquito midgut: reduces neutrophil extracellular traps formation in the presence of platelets and the formation of total cell- and mitochondrial-derived reactive oxygen species. Functionally, (Microbial infection) Promotes Plasmodium berghei parasite transmission from the mammalian host to the mosquito probably by reducing the blood bolus viscosity. Facilitates sporozoite transmission from the mosquito to the mammalian host during blood feeding. The chain is Apyrase from Anopheles gambiae (African malaria mosquito).